Here is a 471-residue protein sequence, read N- to C-terminus: D-hydantoinase (471 aa).

Residues H58, H60, and K150 each coordinate Zn(2+). Residue K150 is modified to N6-carboxylysine. Y155 contributes to the substrate binding site. 2 residues coordinate Zn(2+): H183 and H239. S288 lines the substrate pocket. D315 is a binding site for Zn(2+). Residue N337 coordinates substrate.

It belongs to the metallo-dependent hydrolases superfamily. Hydantoinase/dihydropyrimidinase family. As to quaternary structure, homotetramer. Zn(2+) serves as cofactor. Requires Ni(2+) as cofactor. The cofactor is Co(2+). Mn(2+) is required as a cofactor. In terms of processing, carboxylation allows a single lysine to coordinate two zinc ions.

Its activity is regulated as follows. Completely inhibited by p-chloromercuribenzoate and partially inhibited by metal chelating agents. Functionally, catalyzes the stereospecific hydrolysis of the cyclic amide bond of D-hydantoin. Has no activity on dihydropyrimidines. The sequence is that of D-hydantoinase from Geobacillus stearothermophilus (Bacillus stearothermophilus).